A 678-amino-acid chain; its full sequence is Translation initiation factor eIF2B subunit epsilon (678 aa).

A Phosphothreonine modification is found at T172. The tract at residues 467 to 489 is disordered; that stretch reads STNELHLSDSESSETSSSSEEDM. S500 is modified (phosphoserine). T503 carries the post-translational modification Phosphothreonine. S506 carries the post-translational modification Phosphoserine. Residues 508–674 form the W2 domain; it reads DFDEGDFNKE…NTAESESESE (167 aa).

The protein belongs to the eIF-2B gamma/epsilon subunits family. In terms of assembly, component of the translation initiation factor 2B (eIF2B) complex which is a heterodecamer of two sets of five different subunits: alpha, beta, gamma, delta and epsilon. Subunits alpha, beta and delta comprise a regulatory subcomplex and subunits epsilon and gamma comprise a catalytic subcomplex. Within the complex, the hexameric regulatory complex resides at the center, with the two heterodimeric catalytic subcomplexes bound on opposite sides.

It is found in the cytoplasm. It localises to the cytosol. Acts as a component of the translation initiation factor 2B (eIF2B) complex, which catalyzes the exchange of GDP for GTP on the eukaryotic initiation factor 2 (eIF2) complex gamma subunit. Its guanine nucleotide exchange factor activity is repressed when bound to eIF2 complex phosphorylated on the alpha subunit, thereby limiting the amount of methionyl-initiator methionine tRNA available to the ribosome and consequently global translation is repressed. The protein is Translation initiation factor eIF2B subunit epsilon (tif225) of Schizosaccharomyces pombe (strain 972 / ATCC 24843) (Fission yeast).